A 251-amino-acid chain; its full sequence is Phosphate import ATP-binding protein PstB 2 (251 aa).

One can recognise an ABC transporter domain in the interval 5–246 (ITTKDVHLYY…PDKEQTADYL (242 aa)). Residue 37-44 (GPSGCGKS) coordinates ATP.

This sequence belongs to the ABC transporter superfamily. Phosphate importer (TC 3.A.1.7) family. In terms of assembly, the complex is composed of two ATP-binding proteins (PstB), two transmembrane proteins (PstC and PstA) and a solute-binding protein (PstS).

Its subcellular location is the cell membrane. The enzyme catalyses phosphate(out) + ATP + H2O = ADP + 2 phosphate(in) + H(+). Functionally, part of the ABC transporter complex PstSACB involved in phosphate import. Responsible for energy coupling to the transport system. In Ligilactobacillus salivarius (strain UCC118) (Lactobacillus salivarius), this protein is Phosphate import ATP-binding protein PstB 2.